Here is a 78-residue protein sequence, read N- to C-terminus: Gas vesicle protein A (78 aa).

Positions 9–19 are alpha helix 1; that stretch reads LAEVLDRVLDK. Residues 23 to 31 are beta-strand 1; it reads VDVWARISL. The tract at residues 32–34 is beta turn; it reads VGI. Residues 35 to 43 are beta-strand 2; that stretch reads EILTVEARV. An alpha helix 2 region spans residues 48–67; it reads VDTFLHYAEEIAKIEQAELT.

It belongs to the gas vesicle GvpA family. As to quaternary structure, the gas vesicle shell is 2 nm thick and consists of a single layer of this protein. It forms helical ribs nearly perpendicular to the long axis of the vesicle. Modeled as antiparallel homodimers.

The protein resides in the gas vesicle shell. Functionally, gas vesicles are hollow, gas filled proteinaceous nanostructures found in some microorganisms. During planktonic growth they allow positioning of the organism at a favorable depth for light or nutrient acquisition. GvpA forms the protein shell. This gene replaces p-gvpA of H.salinarum very poorly, only about 1% of GVs are formed; the few gas vesicles formed are quite strong with a very high critical collapse pressure (CCP) of 0.213 MPa. In terms of biological role, expression of a 9.5 kb mc-vac DNA fragment containing 2 divergently transcribed regions (gvpD-gvpE-gvpF-gvpG-gvpH-gvpI-gvpJ-gvpK-gvpL-gvpM and gvpA-gvpC-gvpN-gvpO) allows H.volcanii to produce gas vesicles. This Haloferax mediterranei (strain ATCC 33500 / DSM 1411 / JCM 8866 / NBRC 14739 / NCIMB 2177 / R-4) (Halobacterium mediterranei) protein is Gas vesicle protein A.